Here is an 867-residue protein sequence, read N- to C-terminus: Pentatricopeptide repeat-containing protein At2g39230, mitochondrial (867 aa).

The N-terminal 49 residues, 1 to 49 (MTTFMVSKRFRPPIFLHRFINPKPISSQTRFLHPPDNQSRDISDSTTET), are a transit peptide targeting the mitochondrion. Positions 27-74 (SQTRFLHPPDNQSRDISDSTTETISTLEFPHKTSVPNHSPLTSTSETE) are disordered. Residues 60–72 (SVPNHSPLTSTSE) are compositionally biased toward polar residues. PPR repeat units follow at residues 168-202 (TPRA…KVVP), 203-237 (FVPY…GVAG), 238-272 (DNVT…GAEP), 273-307 (DGLL…LGVP), 309-343 (SQET…GIPM), 344-378 (SVIA…GLAP), 379-413 (DKVM…RIAP), 414-444 (SSVL…SFES), 448-482 (HGFM…GIEP), 483-517 (NVVF…GLEP), 518-552 (NNFT…NFEA), 553-588 (NEVI…RYSM), 589-623 (SCTS…GKSP), 624-658 (NVVT…ELKL), 659-693 (DLPA…GLMP), 694-728 (NVSV…GISC), 729-763 (DLFT…GIVP), 764-798 (DEIL…DVTP), and 799-833 (NVLL…GIVH).

Belongs to the PPR family. P subfamily. Expressed in lateral organ junctions and shoot apical meristem (SAM).

It localises to the mitochondrion. Involved in lateral organ development and boundary demarcation. The sequence is that of Pentatricopeptide repeat-containing protein At2g39230, mitochondrial (LOJ) from Arabidopsis thaliana (Mouse-ear cress).